The following is a 576-amino-acid chain: Arginine--tRNA ligase (576 aa).

Positions 122–132 match the 'HIGH' region motif; it reads PNVAKEMHVGH.

Belongs to the class-I aminoacyl-tRNA synthetase family. As to quaternary structure, monomer.

It is found in the cytoplasm. It carries out the reaction tRNA(Arg) + L-arginine + ATP = L-arginyl-tRNA(Arg) + AMP + diphosphate. This is Arginine--tRNA ligase from Erwinia tasmaniensis (strain DSM 17950 / CFBP 7177 / CIP 109463 / NCPPB 4357 / Et1/99).